The following is a 369-amino-acid chain: UDP-N-acetylglucosamine--N-acetylmuramyl-(pentapeptide) pyrophosphoryl-undecaprenol N-acetylglucosamine transferase (369 aa).

UDP-N-acetyl-alpha-D-glucosamine is bound by residues T10–G12, N124, S195, I252, and Q297.

The protein belongs to the glycosyltransferase 28 family. MurG subfamily.

The protein localises to the cell membrane. The catalysed reaction is Mur2Ac(oyl-L-Ala-gamma-D-Glu-L-Lys-D-Ala-D-Ala)-di-trans,octa-cis-undecaprenyl diphosphate + UDP-N-acetyl-alpha-D-glucosamine = beta-D-GlcNAc-(1-&gt;4)-Mur2Ac(oyl-L-Ala-gamma-D-Glu-L-Lys-D-Ala-D-Ala)-di-trans,octa-cis-undecaprenyl diphosphate + UDP + H(+). Its pathway is cell wall biogenesis; peptidoglycan biosynthesis. In terms of biological role, cell wall formation. Catalyzes the transfer of a GlcNAc subunit on undecaprenyl-pyrophosphoryl-MurNAc-pentapeptide (lipid intermediate I) to form undecaprenyl-pyrophosphoryl-MurNAc-(pentapeptide)GlcNAc (lipid intermediate II). The protein is UDP-N-acetylglucosamine--N-acetylmuramyl-(pentapeptide) pyrophosphoryl-undecaprenol N-acetylglucosamine transferase of Leuconostoc citreum (strain KM20).